The chain runs to 286 residues: 4-diphosphocytidyl-2-C-methyl-D-erythritol kinase (286 aa).

Residue Lys11 is part of the active site. 94 to 104 (PMGGGIGGGSS) is an ATP binding site. The active site involves Asp136.

It belongs to the GHMP kinase family. IspE subfamily.

The catalysed reaction is 4-CDP-2-C-methyl-D-erythritol + ATP = 4-CDP-2-C-methyl-D-erythritol 2-phosphate + ADP + H(+). Its pathway is isoprenoid biosynthesis; isopentenyl diphosphate biosynthesis via DXP pathway; isopentenyl diphosphate from 1-deoxy-D-xylulose 5-phosphate: step 3/6. In terms of biological role, catalyzes the phosphorylation of the position 2 hydroxy group of 4-diphosphocytidyl-2C-methyl-D-erythritol. The polypeptide is 4-diphosphocytidyl-2-C-methyl-D-erythritol kinase (Pseudomonas putida (strain GB-1)).